A 479-amino-acid polypeptide reads, in one-letter code: Sucrose-6-phosphate hydrolase (479 aa).

Substrate contacts are provided by residues 44 to 47 (LLND), Gln63, 106 to 107 (YS), 166 to 167 (RD), and Glu223. Asp47 is a catalytic residue.

The protein belongs to the glycosyl hydrolase 32 family.

Its subcellular location is the cytoplasm. The catalysed reaction is Hydrolysis of terminal non-reducing beta-D-fructofuranoside residues in beta-D-fructofuranosides.. Its pathway is glycan biosynthesis; sucrose metabolism. This chain is Sucrose-6-phosphate hydrolase (scrB), found in Streptococcus mutans serotype c (strain ATCC 700610 / UA159).